Reading from the N-terminus, the 258-residue chain is Apolipoprotein E (258 aa).

A signal peptide spans 1–19 (MRVWTVLLGAVLLLAACQA). 3 repeat units span residues 112 to 133 (VDME…QVAG), 134 to 155 (QNLE…KRLA), and 156 to 173 (KDTE…KEAT). The tract at residues 112–173 (VDMEEAKTRV…KLEAYSKEAT (62 aa)) is 3 X 22 AA approximate tandem repeats.

Belongs to the apolipoprotein A1/A4/E family. As to quaternary structure, homotetramer.

The protein localises to the secreted. It is found in the extracellular space. It localises to the extracellular matrix. APOE is an apolipoprotein, a protein associating with lipid particles, that mainly functions in lipoprotein-mediated lipid transport between organs via the plasma and interstitial fluids. APOE is a core component of plasma lipoproteins and is involved in their production, conversion and clearance. Apolipoproteins are amphipathic molecules that interact both with lipids of the lipoprotein particle core and the aqueous environment of the plasma. This is Apolipoprotein E (APOE) from Alligator mississippiensis (American alligator).